A 257-amino-acid chain; its full sequence is Pyridoxine 5'-phosphate synthase (257 aa).

Asparagine 6 contacts 3-amino-2-oxopropyl phosphate. 8-9 (DH) contributes to the 1-deoxy-D-xylulose 5-phosphate binding site. Residue arginine 17 participates in 3-amino-2-oxopropyl phosphate binding. Histidine 41 functions as the Proton acceptor in the catalytic mechanism. Positions 43 and 48 each coordinate 1-deoxy-D-xylulose 5-phosphate. The active-site Proton acceptor is the glutamate 68. Threonine 98 is a 1-deoxy-D-xylulose 5-phosphate binding site. Histidine 210 functions as the Proton donor in the catalytic mechanism. Residues glycine 211 and 232–233 (GQ) each bind 3-amino-2-oxopropyl phosphate.

It belongs to the PNP synthase family. Homooctamer; tetramer of dimers.

It localises to the cytoplasm. It carries out the reaction 3-amino-2-oxopropyl phosphate + 1-deoxy-D-xylulose 5-phosphate = pyridoxine 5'-phosphate + phosphate + 2 H2O + H(+). It participates in cofactor biosynthesis; pyridoxine 5'-phosphate biosynthesis; pyridoxine 5'-phosphate from D-erythrose 4-phosphate: step 5/5. Functionally, catalyzes the complicated ring closure reaction between the two acyclic compounds 1-deoxy-D-xylulose-5-phosphate (DXP) and 3-amino-2-oxopropyl phosphate (1-amino-acetone-3-phosphate or AAP) to form pyridoxine 5'-phosphate (PNP) and inorganic phosphate. The chain is Pyridoxine 5'-phosphate synthase from Campylobacter jejuni subsp. jejuni serotype O:6 (strain 81116 / NCTC 11828).